A 320-amino-acid polypeptide reads, in one-letter code: Solute carrier family 25 member 33 (320 aa).

Solcar repeat units follow at residues 9–118 (ENTL…AKEQ), 126–213 (NSNT…LKKC), and 231–315 (SGFF…IVYL). 6 helical membrane passes run 12-32 (LLHLFAGGCGGTVGAIFTCPL), 49-65 (VYYPQVHLGTISGAGMV), 121-141 (GIFVPNSNTVHILSAGSAAFV), 190-210 (LTASYAGISETIICFAIYESL), 233-253 (FFGLMAAAAVSKGCASCIAYP), and 298-318 (QIPNTAIVLSTYEFIVYLLGE).

This sequence belongs to the mitochondrial carrier (TC 2.A.29) family.

The protein localises to the mitochondrion inner membrane. It catalyses the reaction UTP(in) + UDP(out) = UTP(out) + UDP(in). It carries out the reaction dUTP(out) + UTP(in) = dUTP(in) + UTP(out). The enzyme catalyses 5-methyl-UTP(out) + UTP(in) = 5-methyl-UTP(in) + UTP(out). The catalysed reaction is 5-methyl-UDP(out) + UTP(in) = 5-methyl-UDP(in) + UTP(out). It catalyses the reaction UTP(in) + CTP(out) = UTP(out) + CTP(in). It carries out the reaction CDP(out) + UTP(in) = CDP(in) + UTP(out). The enzyme catalyses dCTP(out) + UTP(in) = dCTP(in) + UTP(out). The catalysed reaction is dCDP(out) + UTP(in) = dCDP(in) + UTP(out). It catalyses the reaction UTP(in) + GTP(out) = UTP(out) + GTP(in). It carries out the reaction UTP(in) + GDP(out) = UTP(out) + GDP(in). The enzyme catalyses dGTP(out) + UTP(in) = dGTP(in) + UTP(out). The catalysed reaction is dGDP(out) + UTP(in) = dGDP(in) + UTP(out). It catalyses the reaction ITP(out) + UTP(in) = ITP(in) + UTP(out). Functionally, mitochondrial transporter that imports/exports pyrimidine nucleotides into and from mitochondria. Selectively transports uridine, thymidine, guanosine, cytosine and inosine (deoxy)nucleoside di- and triphosphates by an antiport mechanism. May import (deoxy)nucleoside triphosphates in exchange for intramitochondrial (deoxy)nucleoside diphosphates, thus providing precursors necessary for de novo synthesis of mitochondrial DNA and RNA while exporting products of their catabolism. Participates in mitochondrial genome maintenance, regulation of mitochondrial membrane potential and mitochondrial respiration. Upon INS or IGF1 stimulation regulates cell growth and proliferation by controlling mitochondrial DNA replication and transcription, the ratio of mitochondria-to nuclear-encoded components of the electron transport chain resulting in control of mitochondrial ROS production. Participates in dendritic cell endocytosis and may associate with mitochondrial oxidative phosphorylation. The chain is Solute carrier family 25 member 33 (Slc25a33) from Mus musculus (Mouse).